A 335-amino-acid polypeptide reads, in one-letter code: Tryptophan--tRNA ligase (335 aa).

ATP-binding positions include 13 to 15 and 21 to 22; these read QPS and GN. A 'HIGH' region motif is present at residues 14-22; the sequence is PSGNLTIGN. Aspartate 136 contacts L-tryptophan. Residues 148 to 150, isoleucine 187, and 196 to 200 each bind ATP; these read GQD and KMSKS. Positions 196 to 200 match the 'KMSKS' region motif; that stretch reads KMSKS.

The protein belongs to the class-I aminoacyl-tRNA synthetase family. As to quaternary structure, homodimer.

It localises to the cytoplasm. The catalysed reaction is tRNA(Trp) + L-tryptophan + ATP = L-tryptophyl-tRNA(Trp) + AMP + diphosphate + H(+). In terms of biological role, catalyzes the attachment of tryptophan to tRNA(Trp). The sequence is that of Tryptophan--tRNA ligase from Buchnera aphidicola subsp. Acyrthosiphon pisum (strain APS) (Acyrthosiphon pisum symbiotic bacterium).